Here is a 690-residue protein sequence, read N- to C-terminus: Heterogeneous nuclear ribonucleoprotein M (690 aa).

The segment covering 1 to 13 (MAAGVEAAAEVAA) has biased composition (low complexity). The tract at residues 1-63 (MAAGVEAAAE…KRGGNRFEPY (63 aa)) is disordered. A2 carries the N-acetylalanine modification. A Glycyl lysine isopeptide (Lys-Gly) (interchain with G-Cter in SUMO2) cross-link involves residue K17. S29 carries the post-translational modification Phosphoserine. Glycyl lysine isopeptide (Lys-Gly) (interchain with G-Cter in SUMO2) cross-links involve residues K37, K68, and K82. Positions 37–49 (KGEERPTQNEKRK) are enriched in basic and acidic residues. RRM domains are found at residues 70-148 (YRAF…EDPD) and 164-241 (STVF…MDER). S85 carries the phosphoserine modification. Residues K87 and K126 each participate in a glycyl lysine isopeptide (Lys-Gly) (interchain with G-Cter in SUMO2) cross-link. K133 is modified (N6-acetyllysine; alternate). A Glycyl lysine isopeptide (Lys-Gly) (interchain with G-Cter in SUMO2); alternate cross-link involves residue K133. Residues K142 and K144 each participate in a glycyl lysine isopeptide (Lys-Gly) (interchain with G-Cter in SUMO2) cross-link. At S164 the chain carries Phosphoserine. K181 participates in a covalent cross-link: Glycyl lysine isopeptide (Lys-Gly) (interchain with G-Cter in SUMO2). K237 carries the N6-acetyllysine; alternate modification. K237 participates in a covalent cross-link: Glycyl lysine isopeptide (Lys-Gly) (interchain with G-Cter in SUMO2); alternate. Residues K245 and K305 each participate in a glycyl lysine isopeptide (Lys-Gly) (interchain with G-Cter in SUMO2) cross-link. S325 and S337 each carry phosphoserine. Residues K341 and K348 each participate in a glycyl lysine isopeptide (Lys-Gly) (interchain with G-Cter in SUMO2) cross-link. S357 carries the post-translational modification Phosphoserine. 4 tandem repeats follow at residues 360-365 (GIERMG), 367-372 (GIDRIS), 375-380 (GMERMG), and 386-391 (GMDRVG). The interval 360 to 568 (GIERMGPGID…ALGAGIERMG (209 aa)) is 27 X 6 AA repeats of [GEVSTPAN]-[ILMV]-[DE]-[RH]-[MLVI]-[GAV]. Residue S392 is modified to Phosphoserine. Repeat copies occupy residues 393–398 (EIERMG), 400–405 (VMDRMG), and 406–411 (SVERMG). Position 412 is a phosphoserine (S412). 4 repeat units span residues 413–418 (GIERMG), 421–426 (GLDHMA), 428–433 (SIERMG), and 435–440 (TMERIG). S428 is modified (phosphoserine). S441 bears the Phosphoserine mark. 16 consecutive repeat copies span residues 442 to 447 (GVERMG), 453 to 458 (GLERMA), 460 to 465 (PIDRVG), 467 to 472 (TIERMG), 474 to 479 (GVERMG), 481 to 486 (AIERMG), 488 to 493 (SMDRMV), 500 to 505 (GLERMG), 507 to 512 (VMDRMA), 514 to 519 (GLERMG), 522 to 527 (NLERMG), 528 to 532 (LERMG), 535 to 540 (SLERMG), 541 to 545 (LERMG), 548 to 553 (SLERMG), and 563 to 568 (GIERMG). R456 is subject to Omega-N-methylarginine. At S488 the chain carries Phosphoserine. Position 535 is a phosphoserine (S535). A Phosphoserine modification is found at S548. Phosphoserine is present on residues S578, S593, and S597. Residue K611 forms a Glycyl lysine isopeptide (Lys-Gly) (interchain with G-Cter in SUMO2) linkage. The 77-residue stretch at 613-689 (CQIFVRNLPF…REIDVRIDRN (77 aa)) folds into the RRM 3 domain. The residue at position 625 (T625) is a Phosphothreonine. Residue K627 forms a Glycyl lysine isopeptide (Lys-Gly) (interchain with G-Cter in SUMO2) linkage. K632 is modified (N6-acetyllysine). Residues K645 and K652 each participate in a glycyl lysine isopeptide (Lys-Gly) (interchain with G-Cter in SUMO2) cross-link. At K658 the chain carries N6-acetyllysine; alternate. Residue K658 forms a Glycyl lysine isopeptide (Lys-Gly) (interchain with G-Cter in SUMO2); alternate linkage. Residue K658 forms a Glycyl lysine isopeptide (Lys-Gly) (interchain with G-Cter in SUMO1); alternate linkage. Phosphoserine is present on S661. Residue K676 forms a Glycyl lysine isopeptide (Lys-Gly) (interchain with G-Cter in SUMO2) linkage.

Identified in the spliceosome C complex. Interacts with PPIA/CYPA. In terms of processing, sumoylated. In terms of tissue distribution, expressed in all tissues tested, including liver, heart, lung, skeletal muscle, kidney, stomach, large intestine, small intestine, pancreas, spleen, peritoneal macrophage and thyroid.

It localises to the nucleus matrix. Functionally, pre-mRNA binding protein, binds avidly to poly(G) and poly(U) RNA homopolymers. Involved in splicing. Acts as a receptor for carcinoembryonic antigen in Kupffer cells, may initiate a series of signaling events leading to tyrosine phosphorylation of proteins and induction of IL-1 alpha, IL-6, IL-10 and tumor necrosis factor alpha cytokines. The sequence is that of Heterogeneous nuclear ribonucleoprotein M (Hnrnpm) from Rattus norvegicus (Rat).